The chain runs to 142 residues: Protein archease (142 aa).

Residues Asp-12 and Asp-141 each contribute to the Ca(2+) site.

This sequence belongs to the archease family.

Activates the tRNA-splicing ligase complex by facilitating the enzymatic turnover of catalytic subunit RtcB. Acts by promoting the guanylylation of RtcB, a key intermediate step in tRNA ligation. Can also alter the NTP specificity of RtcB such that ATP, dGTP or ITP is used efficiently. The chain is Protein archease from Thermococcus kodakarensis (strain ATCC BAA-918 / JCM 12380 / KOD1) (Pyrococcus kodakaraensis (strain KOD1)).